Consider the following 508-residue polypeptide: tRNA(Ile2) 2-agmatinylcytidine synthetase TiaS (508 aa).

Positions 367–427 (ITGGHVLIEL…YQLNIEKINV (61 aa)) form a DNA-binding region, OB.

The protein belongs to the TiaS family.

The protein resides in the cytoplasm. It carries out the reaction cytidine(34) in tRNA(Ile2) + agmatine + ATP + H2O = 2-agmatinylcytidine(34) in tRNA(Ile2) + AMP + 2 phosphate + 2 H(+). Its function is as follows. ATP-dependent agmatine transferase that catalyzes the formation of 2-agmatinylcytidine (agm2C) at the wobble position (C34) of tRNA(Ile2), converting the codon specificity from AUG to AUA. The sequence is that of tRNA(Ile2) 2-agmatinylcytidine synthetase TiaS from Methanococcus voltae (strain ATCC BAA-1334 / A3).